Consider the following 380-residue polypeptide: Glucose-1-phosphate adenylyltransferase (380 aa).

Alpha-D-glucose 1-phosphate is bound by residues Gly-164, Glu-179–Lys-180, and Ser-190.

The protein belongs to the bacterial/plant glucose-1-phosphate adenylyltransferase family. As to quaternary structure, homotetramer.

The enzyme catalyses alpha-D-glucose 1-phosphate + ATP + H(+) = ADP-alpha-D-glucose + diphosphate. Its pathway is glycan biosynthesis; glycogen biosynthesis. Functionally, involved in the biosynthesis of ADP-glucose, a building block required for the elongation reactions to produce glycogen. Catalyzes the reaction between ATP and alpha-D-glucose 1-phosphate (G1P) to produce pyrophosphate and ADP-Glc. The protein is Glucose-1-phosphate adenylyltransferase of Streptococcus gordonii (strain Challis / ATCC 35105 / BCRC 15272 / CH1 / DL1 / V288).